The primary structure comprises 301 residues: General transcription and DNA repair factor IIH subunit TFB4 (301 aa).

A C4-type zinc finger spans residues 259 to 276 (CSVCLSIFCEHHKKCSTC).

It belongs to the TFB4 family. In terms of assembly, component of the 7-subunit TFIIH core complex composed of XPB, XPD, TFB1/GTF2H1, GTF2H2/P44, TFB4/GTF2H3, TFB2/GTF2H4 and TFB5/GTF2H5, which is active in NER. The core complex associates with the 3-subunit CDK-activating kinase (CAK) module composed of CYCH1/cyclin H1, CDKD and MAT1/At4g30820 to form the 10-subunit holoenzyme (holo-TFIIH) active in transcription.

The protein resides in the nucleus. Functionally, component of the general transcription and DNA repair factor IIH (TFIIH) core complex, which is involved in general and transcription-coupled nucleotide excision repair (NER) of damaged DNA and, when complexed to CAK, in RNA transcription by RNA polymerase II. In NER, TFIIH acts by opening DNA around the lesion to allow the excision of the damaged oligonucleotide and its replacement by a new DNA fragment. In transcription, TFIIH has an essential role in transcription initiation. When the pre-initiation complex (PIC) has been established, TFIIH is required for promoter opening and promoter escape. Phosphorylation of the C-terminal tail (CTD) of the largest subunit of RNA polymerase II by the kinase module CAK controls the initiation of transcription. In Arabidopsis thaliana (Mouse-ear cress), this protein is General transcription and DNA repair factor IIH subunit TFB4.